Consider the following 540-residue polypeptide: uncharacterized protein (540 aa).

ABC transporter domains follow at residues 2-252 (IAVN…KLSQ) and 320-537 (LRVE…LTEL). 34–41 (GANGAGKS) is an ATP binding site.

The protein belongs to the ABC transporter superfamily.

This is an uncharacterized protein from Bacillus subtilis (strain 168).